The sequence spans 115 residues: NADH-ubiquinone oxidoreductase chain 3 (115 aa).

The next 3 helical transmembrane spans lie at 4–24 (LTALLVNITLSMLLIIIAFWL), 55–75 (FFLVAITFLLFDLEIALLLPL), and 83–103 (YINIMMSTAFILVSVLALGLA).

It belongs to the complex I subunit 3 family. In terms of assembly, core subunit of respiratory chain NADH dehydrogenase (Complex I) which is composed of 45 different subunits. Interacts with TMEM186. Interacts with TMEM242.

The protein localises to the mitochondrion inner membrane. The enzyme catalyses a ubiquinone + NADH + 5 H(+)(in) = a ubiquinol + NAD(+) + 4 H(+)(out). Functionally, core subunit of the mitochondrial membrane respiratory chain NADH dehydrogenase (Complex I) which catalyzes electron transfer from NADH through the respiratory chain, using ubiquinone as an electron acceptor. Essential for the catalytic activity of complex I. The polypeptide is NADH-ubiquinone oxidoreductase chain 3 (Peromyscus polionotus (Oldfield mouse)).